Reading from the N-terminus, the 206-residue chain is Putative apoptosis inhibitor 021L (206 aa).

Over residues 95-105 the composition is skewed to polar residues; the sequence is TSKSPVSNQPS. Positions 95-114 are disordered; it reads TSKSPVSNQPSPEEDEPIPD. The segment at 157–195 adopts an RING-type zinc-finger fold; that stretch reads CVVCQANVRNVVFVPCNHLATCISCSANPLMPKKCPMCR.

The protein belongs to the IIV-6 193R family.

Functionally, plays a role early in infection by preventing host cell apoptosis. This Aedes vexans (Inland floodwater mosquito) protein is Putative apoptosis inhibitor 021L.